Here is a 387-residue protein sequence, read N- to C-terminus: MSNGAFDAIFEYAWGQIDKPISGDFIYGKDLPKLIEIIENIFQKAQKSGSYELRLPLFSEINKDLFRTFSNTKTFFKIHKEEFDDIFFNLVNHPLREILENAFIGVDSIPSDFIVSMNLNSPSKFLVENKSKNTEGAGISTPRKKLTESPIKLLSRNNIGKALEVQVEELKRELTAKQSLLQENERQVSELKIRLETYQEKYASIQQRFSDLQKARQVEDNQNSSRTSDPGSPLVTGIDQKAILEEFRRRLQRQTDTISFLKDQIRRERGLNCSNDKVSHSKRKHATTDGDGTFKNFISAVPSNIWVKATIRIIVCFALLAGVLPYIRKYVYAHDTPSQNSRLQLSWWENSGILSKIVWFFEDQTDLETEYRSNANVDDAYSRVFGI.

Positions 157 to 269 (NNIGKALEVQ…FLKDQIRRER (113 aa)) form a coiled coil. Residues 216–235 (RQVEDNQNSSRTSDPGSPLV) form a disordered region. Over residues 220–230 (DNQNSSRTSDP) the composition is skewed to polar residues. The helical transmembrane segment at 311–327 (IRIIVCFALLAGVLPYI) threads the bilayer.

It belongs to the MPS2 family. Interacts with BBP1, MPS3, and SPC24.

The protein resides in the nucleus membrane. The protein localises to the cytoplasm. Its subcellular location is the cytoskeleton. It localises to the microtubule organizing center. It is found in the spindle pole body. Functionally, component of the spindle pole body (SPB) required for insertion of the nascent SPB into the nuclear envelope and for the proper execution of spindle pole body (SPB) duplication. The chain is Monopolar spindle protein 2 (MPS2) from Saccharomyces cerevisiae (strain JAY291) (Baker's yeast).